A 136-amino-acid chain; its full sequence is MLQPKRTKFRKVMTGRNRGLAKGTEVSFGEFGLKAVGRGRLTARQIEAARRAMTRHIKRQGQIWIRVIPDKPSVQKPLEVRQGKGKGSAVYWVAQIQPGKVMYEMNGVPEELAREAFRLAARKLPVKTTFVTKQVM.

The protein belongs to the universal ribosomal protein uL16 family. In terms of assembly, part of the 50S ribosomal subunit.

Its function is as follows. Binds 23S rRNA and is also seen to make contacts with the A and possibly P site tRNAs. The polypeptide is Large ribosomal subunit protein uL16 (Vibrio atlanticus (strain LGP32) (Vibrio splendidus (strain Mel32))).